Consider the following 194-residue polypeptide: Ribosome maturation factor RimP (194 aa).

This sequence belongs to the RimP family.

Its subcellular location is the cytoplasm. Its function is as follows. Required for maturation of 30S ribosomal subunits. In Jannaschia sp. (strain CCS1), this protein is Ribosome maturation factor RimP.